Consider the following 295-residue polypeptide: 4-hydroxy-tetrahydrodipicolinate synthase (295 aa).

T47 is a pyruvate binding site. Y135 serves as the catalytic Proton donor/acceptor. K163 functions as the Schiff-base intermediate with substrate in the catalytic mechanism. I206 is a pyruvate binding site.

The protein belongs to the DapA family. Homodimer.

Its subcellular location is the cytoplasm. The catalysed reaction is L-aspartate 4-semialdehyde + pyruvate = (2S,4S)-4-hydroxy-2,3,4,5-tetrahydrodipicolinate + H2O + H(+). It functions in the pathway amino-acid biosynthesis; L-lysine biosynthesis via DAP pathway; (S)-tetrahydrodipicolinate from L-aspartate: step 3/4. Its activity is regulated as follows. Is not feedback inhibited by lysine. Its function is as follows. Catalyzes the condensation of (S)-aspartate-beta-semialdehyde [(S)-ASA] and pyruvate to 4-hydroxy-tetrahydrodipicolinate (HTPA). This is 4-hydroxy-tetrahydrodipicolinate synthase from Staphylococcus aureus (strain COL).